A 179-amino-acid polypeptide reads, in one-letter code: Large ribosomal subunit protein uL5 (179 aa).

Belongs to the universal ribosomal protein uL5 family. As to quaternary structure, part of the 50S ribosomal subunit; part of the 5S rRNA/L5/L18/L25 subcomplex. Contacts the 5S rRNA and the P site tRNA. Forms a bridge to the 30S subunit in the 70S ribosome.

In terms of biological role, this is one of the proteins that bind and probably mediate the attachment of the 5S RNA into the large ribosomal subunit, where it forms part of the central protuberance. In the 70S ribosome it contacts protein S13 of the 30S subunit (bridge B1b), connecting the 2 subunits; this bridge is implicated in subunit movement. Contacts the P site tRNA; the 5S rRNA and some of its associated proteins might help stabilize positioning of ribosome-bound tRNAs. This Shewanella amazonensis (strain ATCC BAA-1098 / SB2B) protein is Large ribosomal subunit protein uL5.